The chain runs to 263 residues: Large ribosomal subunit protein uL29m (263 aa).

Disordered stretches follow at residues 51–92 and 208–263; these read ARVT…EELP and PEID…APRV. Over residues 53–66 the composition is skewed to basic and acidic residues; that stretch reads VTRDNSKQRGESAL. The segment covering 214 to 223 has biased composition (polar residues); sequence NPENPYTPST. Over residues 233-245 the composition is skewed to low complexity; it reads GAEASETQSTTTE. The segment covering 246–257 has biased composition (polar residues); the sequence is IDPTTIPSSKSQ.

Belongs to the universal ribosomal protein uL29 family. As to quaternary structure, component of the mitochondrial large ribosomal subunit (mt-LSU). Mature N.crassa 74S mitochondrial ribosomes consist of a small (37S) and a large (54S) subunit. The 37S small subunit contains a 16S ribosomal RNA (16S mt-rRNA) and 32 different proteins. The 54S large subunit contains a 23S rRNA (23S mt-rRNA) and 42 different proteins.

The protein localises to the mitochondrion. Its function is as follows. Component of the mitochondrial ribosome (mitoribosome), a dedicated translation machinery responsible for the synthesis of mitochondrial genome-encoded proteins, including at least some of the essential transmembrane subunits of the mitochondrial respiratory chain. The mitoribosomes are attached to the mitochondrial inner membrane and translation products are cotranslationally integrated into the membrane. In Neurospora crassa (strain ATCC 24698 / 74-OR23-1A / CBS 708.71 / DSM 1257 / FGSC 987), this protein is Large ribosomal subunit protein uL29m (mrpl4).